A 211-amino-acid chain; its full sequence is Thiamine-phosphate synthase (211 aa).

4-amino-2-methyl-5-(diphosphooxymethyl)pyrimidine contacts are provided by residues 37–41 (QLRIK) and asparagine 69. Mg(2+)-binding residues include aspartate 70 and aspartate 89. Serine 108 is a 4-amino-2-methyl-5-(diphosphooxymethyl)pyrimidine binding site. 134-136 (TQT) is a binding site for 2-[(2R,5Z)-2-carboxy-4-methylthiazol-5(2H)-ylidene]ethyl phosphate. A 4-amino-2-methyl-5-(diphosphooxymethyl)pyrimidine-binding site is contributed by lysine 137. 2-[(2R,5Z)-2-carboxy-4-methylthiazol-5(2H)-ylidene]ethyl phosphate-binding positions include glycine 166 and 186-187 (IS).

The protein belongs to the thiamine-phosphate synthase family. It depends on Mg(2+) as a cofactor.

The enzyme catalyses 2-[(2R,5Z)-2-carboxy-4-methylthiazol-5(2H)-ylidene]ethyl phosphate + 4-amino-2-methyl-5-(diphosphooxymethyl)pyrimidine + 2 H(+) = thiamine phosphate + CO2 + diphosphate. It carries out the reaction 2-(2-carboxy-4-methylthiazol-5-yl)ethyl phosphate + 4-amino-2-methyl-5-(diphosphooxymethyl)pyrimidine + 2 H(+) = thiamine phosphate + CO2 + diphosphate. The catalysed reaction is 4-methyl-5-(2-phosphooxyethyl)-thiazole + 4-amino-2-methyl-5-(diphosphooxymethyl)pyrimidine + H(+) = thiamine phosphate + diphosphate. The protein operates within cofactor biosynthesis; thiamine diphosphate biosynthesis; thiamine phosphate from 4-amino-2-methyl-5-diphosphomethylpyrimidine and 4-methyl-5-(2-phosphoethyl)-thiazole: step 1/1. Condenses 4-methyl-5-(beta-hydroxyethyl)thiazole monophosphate (THZ-P) and 2-methyl-4-amino-5-hydroxymethyl pyrimidine pyrophosphate (HMP-PP) to form thiamine monophosphate (TMP). This is Thiamine-phosphate synthase from Shigella boydii serotype 4 (strain Sb227).